The chain runs to 388 residues: Aldolase vrtJ (388 aa).

Lys241 is modified (N6-(pyridoxal phosphate)lysine).

It belongs to the threonine aldolase family. It depends on pyridoxal 5'-phosphate as a cofactor.

Its pathway is secondary metabolite biosynthesis; terpenoid biosynthesis. Aldolase; part of the gene cluster that mediates the biosynthesis of viridicatumtoxin, a tetracycline-like fungal meroterpenoid with a unique, fused spirobicyclic ring system. The first step of the pathway is the production of the malonamoyl-CoA starter unit for the polyketide synthase vrtA. The aldolase vrtJ may be involved in the synthesis of the malonamate substrate for malonamoyl-CoA synthetase vrtB. The polyketide synthase vrtA then may utilize the malonamoyl-CoA starter unit, followed by sequential condensation of eight malonyl-CoA units to form the polyketide backbone. The cyclization of the last ring could be mediated by the lactamase-like protein vrtG. The proposed post-PKS tailoring steps are a hydroxylation at C5 catalyzed the cytochrome P450 monooxygenase vrtE, a hydroxylation at C12a catalyzed by VrtH and/or VrtI, and an O-methylation by the O-methyltransferase vrtF. VrtC is then proposed to catalyze the transfer of a geranyl group synthesized by vrtD to the aromatic C ring of the tetracyclic polyketide intermediate of viridicatumtoxin to yield previridicatumtoxin. Finally, the cytochrome P450 monooxygenase vrtK catalyzes the spirocyclization of the geranyl moiety of previridicatumtoxin to afford viridicatumtoxin. The sequence is that of Aldolase vrtJ from Penicillium aethiopicum.